Reading from the N-terminus, the 85-residue chain is Toxin 3FTx-Lei1 (85 aa).

The N-terminal stretch at 1 to 21 is a signal peptide; it reads MKTLLLSLVVVTFVCLDLAHT. 5 cysteine pairs are disulfide-bonded: C24-C45, C27-C32, C38-C63, C67-C78, and C79-C84.

Belongs to the three-finger toxin family. Ancestral subfamily. In terms of tissue distribution, expressed by the venom gland.

It localises to the secreted. The chain is Toxin 3FTx-Lei1 from Leioheterodon madagascariensis (Malagasy giant hognose snake).